A 481-amino-acid chain; its full sequence is 3-isopropylmalate dehydratase large subunit (481 aa).

The [4Fe-4S] cluster site is built by cysteine 357, cysteine 417, and cysteine 420.

The protein belongs to the aconitase/IPM isomerase family. LeuC type 1 subfamily. As to quaternary structure, heterodimer of LeuC and LeuD. Requires [4Fe-4S] cluster as cofactor.

It carries out the reaction (2R,3S)-3-isopropylmalate = (2S)-2-isopropylmalate. Its pathway is amino-acid biosynthesis; L-leucine biosynthesis; L-leucine from 3-methyl-2-oxobutanoate: step 2/4. Its function is as follows. Catalyzes the isomerization between 2-isopropylmalate and 3-isopropylmalate, via the formation of 2-isopropylmaleate. In Mycolicibacterium vanbaalenii (strain DSM 7251 / JCM 13017 / BCRC 16820 / KCTC 9966 / NRRL B-24157 / PYR-1) (Mycobacterium vanbaalenii), this protein is 3-isopropylmalate dehydratase large subunit.